A 159-amino-acid chain; its full sequence is Ribosomal RNA large subunit methyltransferase H (159 aa).

S-adenosyl-L-methionine contacts are provided by residues Gly108 and 127–132 (FGKLTM).

It belongs to the RNA methyltransferase RlmH family. As to quaternary structure, homodimer.

The protein localises to the cytoplasm. It carries out the reaction pseudouridine(1915) in 23S rRNA + S-adenosyl-L-methionine = N(3)-methylpseudouridine(1915) in 23S rRNA + S-adenosyl-L-homocysteine + H(+). Specifically methylates the pseudouridine at position 1915 (m3Psi1915) in 23S rRNA. This is Ribosomal RNA large subunit methyltransferase H from Lactobacillus acidophilus (strain ATCC 700396 / NCK56 / N2 / NCFM).